The primary structure comprises 476 residues: Adenosylhomocysteinase (476 aa).

Substrate-binding residues include Thr67, Asp142, and Glu202. 203–205 lines the NAD(+) pocket; the sequence is TTT. Residues Lys232 and Asp236 each contribute to the substrate site. NAD(+) is bound by residues Asn237, 266-271, Glu289, Asn324, 345-347, and Asn390; these read GYGDVG and IGH.

The protein belongs to the adenosylhomocysteinase family. It depends on NAD(+) as a cofactor.

Its subcellular location is the cytoplasm. It catalyses the reaction S-adenosyl-L-homocysteine + H2O = L-homocysteine + adenosine. Its pathway is amino-acid biosynthesis; L-homocysteine biosynthesis; L-homocysteine from S-adenosyl-L-homocysteine: step 1/1. In terms of biological role, may play a key role in the regulation of the intracellular concentration of adenosylhomocysteine. In Prochlorococcus marinus (strain MIT 9211), this protein is Adenosylhomocysteinase.